We begin with the raw amino-acid sequence, 197 residues long: Xanthine phosphoribosyltransferase (197 aa).

Xanthine-binding residues include leucine 20 and threonine 27. Residue 128 to 132 (ANGQA) coordinates 5-phospho-alpha-D-ribose 1-diphosphate. Lysine 156 contacts xanthine.

Belongs to the purine/pyrimidine phosphoribosyltransferase family. Xpt subfamily. As to quaternary structure, homodimer.

Its subcellular location is the cytoplasm. It carries out the reaction XMP + diphosphate = xanthine + 5-phospho-alpha-D-ribose 1-diphosphate. It functions in the pathway purine metabolism; XMP biosynthesis via salvage pathway; XMP from xanthine: step 1/1. Its function is as follows. Converts the preformed base xanthine, a product of nucleic acid breakdown, to xanthosine 5'-monophosphate (XMP), so it can be reused for RNA or DNA synthesis. The protein is Xanthine phosphoribosyltransferase of Lactococcus lactis subsp. cremoris (strain SK11).